Reading from the N-terminus, the 363-residue chain is Pyrimidine monooxygenase RutA (363 aa).

Residues Ile-49–Lys-50, Asn-115, Glu-124, Arg-140–Tyr-141, and Ser-190 each bind FMN.

This sequence belongs to the NtaA/SnaA/DszA monooxygenase family. RutA subfamily.

It carries out the reaction uracil + FMNH2 + NADH + O2 = (Z)-3-ureidoacrylate + FMN + NAD(+) + H2O + H(+). The catalysed reaction is thymine + FMNH2 + NADH + O2 = (Z)-2-methylureidoacrylate + FMN + NAD(+) + H2O + H(+). Catalyzes the pyrimidine ring opening between N-3 and C-4 by an unusual flavin hydroperoxide-catalyzed mechanism, adding oxygen atoms in the process to yield ureidoacrylate peracid, that immediately reacts with FMN forming ureidoacrylate and FMN-N(5)-oxide. The FMN-N(5)-oxide reacts spontaneously with NADH to produce FMN. Requires the flavin reductase RutF to regenerate FMN in vivo. The sequence is that of Pyrimidine monooxygenase RutA from Escherichia coli O103:H2 (strain 12009 / EHEC).